The primary structure comprises 474 residues: tRNA-2-methylthio-N(6)-dimethylallyladenosine synthase (474 aa).

An MTTase N-terminal domain is found at Lys-3–Arg-120. [4Fe-4S] cluster-binding residues include Cys-12, Cys-49, Cys-83, Cys-157, Cys-161, and Cys-164. The Radical SAM core domain occupies Arg-143 to Arg-375. Positions Arg-378–Arg-441 constitute a TRAM domain.

Belongs to the methylthiotransferase family. MiaB subfamily. In terms of assembly, monomer. It depends on [4Fe-4S] cluster as a cofactor.

It is found in the cytoplasm. It carries out the reaction N(6)-dimethylallyladenosine(37) in tRNA + (sulfur carrier)-SH + AH2 + 2 S-adenosyl-L-methionine = 2-methylsulfanyl-N(6)-dimethylallyladenosine(37) in tRNA + (sulfur carrier)-H + 5'-deoxyadenosine + L-methionine + A + S-adenosyl-L-homocysteine + 2 H(+). Functionally, catalyzes the methylthiolation of N6-(dimethylallyl)adenosine (i(6)A), leading to the formation of 2-methylthio-N6-(dimethylallyl)adenosine (ms(2)i(6)A) at position 37 in tRNAs that read codons beginning with uridine. This Shewanella baltica (strain OS185) protein is tRNA-2-methylthio-N(6)-dimethylallyladenosine synthase.